We begin with the raw amino-acid sequence, 298 residues long: Ethylmalonyl-CoA decarboxylase (298 aa).

Belongs to the enoyl-CoA hydratase/isomerase family.

The protein resides in the cytoplasm. Its subcellular location is the cytosol. The enzyme catalyses (2S)-ethylmalonyl-CoA + H(+) = butanoyl-CoA + CO2. It catalyses the reaction (S)-methylmalonyl-CoA + H(+) = propanoyl-CoA + CO2. It carries out the reaction (2R)-ethylmalonyl-CoA + H(+) = butanoyl-CoA + CO2. Decarboxylates ethylmalonyl-CoA, a potentially toxic metabolite, to form butyryl-CoA, suggesting it might be involved in metabolite proofreading. Acts preferentially on (S)-ethylmalonyl-CoA but also has some activity on the (R)-isomer. Also has methylmalonyl-CoA decarboxylase activity at lower level. This is Ethylmalonyl-CoA decarboxylase (ECHDC1) from Gallus gallus (Chicken).